A 285-amino-acid chain; its full sequence is uncharacterized protein (285 aa).

Residues 6–26 (IKYFSTIIVAVVAVLAGWWLW) form a helical membrane-spanning segment.

Belongs to the membrane fusion protein (MFP) (TC 8.A.1) family.

The protein resides in the membrane. This is an uncharacterized protein from Escherichia coli (strain K12).